A 358-amino-acid chain; its full sequence is MKIAILGAGCYRTHAAAGITNFMRACEVAKEVGKPEIALTHSSITYGAELLHLVPDVKEVIVSDPCFAEEPGLVVIDEFDPKEVMEAHLSGNPESIMPKIREVVKAKAKELPKPPKACIHLVHPEDVGLKVTSDDREAVEGADIVITWLPKGNKQPDIIKKFADAIPEGAIVTHACTIPTTKFAKIFKDLGREDLNITSYHPGCVPEMKGQVYIAEGYASEEAVNKLYEIGKIARGKAFKMPANLIGPVCDMCSAVTATVYAGLLAYRDAVTKILGAPADFAQMMADEALTQIHNLMKEKGIANMEEALDPAALLGTADSMCFGPLAEILPTALKVLEKHKVVEEEGKTKCEIMSQKE.

It belongs to the HMD family.

The catalysed reaction is 5,10-methenyl-5,6,7,8-tetrahydromethanopterin + H2 = 5,10-methylenetetrahydromethanopterin + H(+). Its pathway is one-carbon metabolism; methanogenesis from CO(2); 5,10-methylene-5,6,7,8-tetrahydromethanopterin from 5,10-methenyl-5,6,7,8-tetrahydromethanopterin (hydrogen route): step 1/1. Its function is as follows. Catalyzes the reversible reduction of methenyl-H(4)MPT(+) to methylene-H(4)MPT. This Methanocaldococcus jannaschii (strain ATCC 43067 / DSM 2661 / JAL-1 / JCM 10045 / NBRC 100440) (Methanococcus jannaschii) protein is 5,10-methenyltetrahydromethanopterin hydrogenase (hmd).